The following is a 158-amino-acid chain: NADH-quinone oxidoreductase subunit B (158 aa).

The [4Fe-4S] cluster site is built by cysteine 37, cysteine 38, cysteine 102, and cysteine 132.

This sequence belongs to the complex I 20 kDa subunit family. In terms of assembly, NDH-1 is composed of 14 different subunits. Subunits NuoB, C, D, E, F, and G constitute the peripheral sector of the complex. It depends on [4Fe-4S] cluster as a cofactor.

The protein resides in the cell inner membrane. It catalyses the reaction a quinone + NADH + 5 H(+)(in) = a quinol + NAD(+) + 4 H(+)(out). Its function is as follows. NDH-1 shuttles electrons from NADH, via FMN and iron-sulfur (Fe-S) centers, to quinones in the respiratory chain. Couples the redox reaction to proton translocation (for every two electrons transferred, four hydrogen ions are translocated across the cytoplasmic membrane), and thus conserves the redox energy in a proton gradient. The sequence is that of NADH-quinone oxidoreductase subunit B from Legionella pneumophila (strain Corby).